A 303-amino-acid polypeptide reads, in one-letter code: Sodium/potassium-transporting ATPase subunit beta-1 (303 aa).

At 1-34 (MPAATKDSDGGWKKFLWNSEKKEFLGRTGGSWAK) the chain is on the cytoplasmic side. Residues 35 to 55 (ILLFYVIFYGCLAGIFIGTIQ) form a helical; Signal-anchor for type II membrane protein membrane-spanning segment. Topologically, residues 56-303 (ALLLTINDFK…FDVKFTINES (248 aa)) are extracellular. N113 is a glycosylation site (N-linked (GlcNAc...) asparagine). Disulfide bonds link C126–C149 and C159–C175. 2 N-linked (GlcNAc...) asparagine glycosylation sites follow: N194 and N264. A disulfide bridge connects residues C214 and C275.

Belongs to the X(+)/potassium ATPases subunit beta family. As to quaternary structure, the sodium/potassium-transporting ATPase is composed of a catalytic alpha subunit, an auxiliary non-catalytic beta subunit and an additional regulatory subunit. As to expression, detected in all tissues except liver and cardiac muscle. Highest levels found in intestine, ovary and kidney with marginally lower levels in brain, spleen, esophagus, eye and pancreas, intermediate levels in gill and low levels in white and red skeletal muscle.

The protein localises to the cell membrane. This is the non-catalytic component of the active enzyme, which catalyzes the hydrolysis of ATP coupled with the exchange of Na(+) and K(+) ions across the plasma membrane. The beta subunit regulates, through assembly of alpha/beta heterodimers, the number of sodium pumps transported to the plasma membrane. This chain is Sodium/potassium-transporting ATPase subunit beta-1 (atp1b1), found in Anguilla anguilla (European freshwater eel).